Consider the following 185-residue polypeptide: Ribosome-recycling factor (185 aa).

This sequence belongs to the RRF family.

The protein resides in the cytoplasm. Functionally, responsible for the release of ribosomes from messenger RNA at the termination of protein biosynthesis. May increase the efficiency of translation by recycling ribosomes from one round of translation to another. This chain is Ribosome-recycling factor, found in Proteus mirabilis (strain HI4320).